The following is a 488-amino-acid chain: ATP synthase subunit beta (488 aa).

Residue 164-171 (GGAGMGKT) participates in ATP binding.

Belongs to the ATPase alpha/beta chains family. In terms of assembly, F-type ATPases have 2 components, CF(1) - the catalytic core - and CF(0) - the membrane proton channel. CF(1) has five subunits: alpha(3), beta(3), gamma(1), delta(1), epsilon(1). CF(0) has four main subunits: a(1), b(1), b'(1) and c(9-12).

It localises to the cellular thylakoid membrane. The enzyme catalyses ATP + H2O + 4 H(+)(in) = ADP + phosphate + 5 H(+)(out). Its function is as follows. Produces ATP from ADP in the presence of a proton gradient across the membrane. The catalytic sites are hosted primarily by the beta subunits. This Synechococcus sp. (strain RCC307) protein is ATP synthase subunit beta.